A 275-amino-acid polypeptide reads, in one-letter code: MAIGLSTYAFFWRASSRVPNPLGLAAMLEQTAESGAGVFQICDYAAVEALSPAELEKLRQRAVDLGIQLELGTRGLATDHLTRYLTMARALDVRFIRTMFNSATHKPTQDEALALLRCVLPEFEQYNIQLGLETYEQVKTRDVLAVVDAIDSPALGICLDPGNCVAALEYPHEVIELTASRVVNLHIKDFAFARQEGWVGFTYSGCLLGTGLLDYDALHQTIRPNERNINQIVEHWLPWQASAEETCRLEDAWTRHSLNYLYTRNPYANRSSHIL.

It catalyses the reaction 3-oxoisoapionate + H(+) = L-erythrulose + CO2. It participates in carbohydrate metabolism. Functionally, involved in catabolism of D-apiose. Catalyzes decarboxylation of 3-oxo-isoapionate to L-erythrulose. The protein is 3-oxo-isoapionate decarboxylase of Pectobacterium atrosepticum (strain SCRI 1043 / ATCC BAA-672) (Erwinia carotovora subsp. atroseptica).